Reading from the N-terminus, the 202-residue chain is Orotate phosphoribosyltransferase (202 aa).

5-phospho-alpha-D-ribose 1-diphosphate contacts are provided by residues K93 and 113 to 121 (EDIITTGGS). Residues T117 and R145 each contribute to the orotate site.

The protein belongs to the purine/pyrimidine phosphoribosyltransferase family. PyrE subfamily. Homodimer. Mg(2+) is required as a cofactor.

It catalyses the reaction orotidine 5'-phosphate + diphosphate = orotate + 5-phospho-alpha-D-ribose 1-diphosphate. It functions in the pathway pyrimidine metabolism; UMP biosynthesis via de novo pathway; UMP from orotate: step 1/2. Functionally, catalyzes the transfer of a ribosyl phosphate group from 5-phosphoribose 1-diphosphate to orotate, leading to the formation of orotidine monophosphate (OMP). The polypeptide is Orotate phosphoribosyltransferase (Campylobacter concisus (strain 13826)).